Here is a 675-residue protein sequence, read N- to C-terminus: MWKKFFGQLQRIGKALMLPVAILPAAGLLLALGNAFQGDALQSLMPFIKAEGFQNVAKMMEGAGGIIFDNLAIIFALGVAIGLASGDGVAAIAAFVGFIVLNKTMGMFLGVTPEKAADAATGFANVLGIPTLQTGVFGGIIIGALAAWCYNKFYNISLPSYLGFFAGKRFVPIMMATCSFILAFPMAIIWPSIQGGLNAFSEGLLASNTGLAVFLFGFIKRLLIPFGLHHIFHAPFWFEFGSYKNAAGQIIHGDQRIFIEQIRDNVPLTAGKFMQGEFPVMMFGLPAAALAIYQTAKKENKKVVAGLMLSGALTSFLTGITEPLEFSFLFVAPLLFFIHAVLDGLSFLILYLLDLHLGYTFSGGFIDFFLLGILPNKTQWWLVIPVGLVYAAIYYIIFRFLIVKFNFKTPGREDKEVKSSNVAASELPFKVLDAMGGKANIKHLDACITRLRVEVNDKAKVDVQELKDLGASGVLEVGNNMQAIFGPKSDQIKHDMQQIMDGKITSPEETTVTEEGDKETAEIAAAGGGVVYAPIKGEVVDISEVPDKVFSEKMMGDGIAIKPETGEVVAPFDGVVKMVFPTKHAIGLESKDGIELLIHFGLETVKLEGKGFDILVKENDNIVLGQPLMKVDLDYIKEHADSTITPIVVTNLNGRTMEVLQHGEVKQGDKVILVK.

A PTS EIIC type-1 domain is found at 3 to 414 (KKFFGQLQRI…FNFKTPGRED (412 aa)). 11 consecutive transmembrane segments (helical) span residues 16–36 (LMLPVAILPAAGLLLALGNAF), 63–83 (AGGIIFDNLAIIFALGVAIGL), 89–109 (VAAIAAFVGFIVLNKTMGMFL), 126–146 (VLGIPTLQTGVFGGIIIGALA), 170–190 (FVPIMMATCSFILAFPMAIIW), 199–219 (AFSEGLLASNTGLAVFLFGFI), 273–293 (FMQGEFPVMMFGLPAAALAIY), 303–323 (VVAGLMLSGALTSFLTGITEP), 329–349 (LFVAPLLFFIHAVLDGLSFLI), 355–375 (LHLGYTFSGGFIDFFLLGILP), and 383–403 (VIPVGLVYAAIYYIIFRFLIV). The PTS EIIB type-1 domain maps to 425 to 506 (SELPFKVLDA…QQIMDGKITS (82 aa)). The Phosphocysteine intermediate; for EIIB activity role is filled by Cys447. Residues 547–651 (DKVFSEKMMG…STITPIVVTN (105 aa)) form the PTS EIIA type-1 domain. His599 functions as the Tele-phosphohistidine intermediate; for EIIA activity in the catalytic mechanism.

It localises to the cell membrane. It carries out the reaction N(pros)-phospho-L-histidyl-[protein] + D-glucose(out) = D-glucose 6-phosphate(in) + L-histidyl-[protein]. Its activity is regulated as follows. Inhibited by 2-deoxyglucose and methyl beta-D-glucoside, but not by methyl alpha-D-glucoside, p-nitrophenyl alpha-D-glucoside, o-nitrophenyl beta-D-glucoside and salicin. In terms of biological role, the phosphoenolpyruvate-dependent sugar phosphotransferase system (sugar PTS), a major carbohydrate active transport system, catalyzes the phosphorylation of incoming sugar substrates concomitantly with their translocation across the cell membrane. This system is involved in glucose transport. Cannot transport galactose, fructose, mannose, cellobiose, sucrose, maltose, lactose, melibiose and trehalose, as well as N-acetylglucosamine. The protein is PTS system glucose-specific EIICBA component (ptsG) of Staphylococcus carnosus (strain TM300).